The chain runs to 293 residues: Large ribosomal subunit protein uL2c (293 aa).

A disordered region spans residues 224–245 (VMNPVDHPHGGGEGKSPIGRAR).

It belongs to the universal ribosomal protein uL2 family. As to quaternary structure, part of the 50S ribosomal subunit.

It localises to the plastid. It is found in the chloroplast. The chain is Large ribosomal subunit protein uL2c (rpl2) from Pyropia yezoensis (Susabi-nori).